Consider the following 427-residue polypeptide: Vitamin D3 receptor (427 aa).

Positions 21-96 (PRICGVCGDR…IGMMKEFILT (76 aa)) form a DNA-binding region, nuclear receptor. 8 residues coordinate Zn(2+): Cys24, Cys27, Cys41, Cys44, Cys60, Cys66, Cys76, and Cys79. NR C4-type zinc fingers lie at residues 24–44 (CGVC…CEGC) and 60–84 (CPFN…LKRC). The segment at 97–126 (DEEVQRKREMILKRKEEEALKDSLRPKLSE) is hinge. The NR LBD domain occupies 127–423 (EQQRIIAILL…LTPLVLEVFG (297 aa)). Tyr143 serves as a coordination point for calcitriol. A disordered region spans residues 158–183 (RVNDGGGSHPSRPNSRHTPSFSGDSS). Ser237 provides a ligand contact to calcitriol. Positions 246-264 (KMIPGFRDLTSEDQIVLLK) are interaction with coactivator LXXLL motif. The calcitriol site is built by Arg274, Ser278, His305, and His397. The short motif at 416-424 (PLVLEVFGN) is the 9aaTAD element.

Belongs to the nuclear hormone receptor family. NR1 subfamily. Homodimer in the absence of bound vitamin D3. Heterodimer with RXRA after vitamin D3 binding. Interacts with MED1, NCOA1, NCOA2, NCOA3 and NCOA6 coactivators, leading to a strong increase of transcription of target genes. Interacts with the corepressor NCOR1. Interacts with SNW1. Interacts with IRX4, the interaction does not affect its transactivation activity. In terms of processing, ubiquitinated by UBR5, leading to its degradation: UBR5 specifically recognizes and binds ligand-bound VDR when it is not associated with coactivators (NCOAs). In presence of NCOAs, the UBR5-degron is not accessible, preventing its ubiquitination and degradation.

The protein resides in the nucleus. It is found in the cytoplasm. In terms of biological role, nuclear receptor for calcitriol, the active form of vitamin D3 which mediates the action of this vitamin on cells. Enters the nucleus upon vitamin D3 binding where it forms heterodimers with the retinoid X receptor/RXR. The VDR-RXR heterodimers bind to specific response elements on DNA and activate the transcription of vitamin D3-responsive target genes. Plays a central role in calcium homeostasis. This is Vitamin D3 receptor (VDR) from Saguinus oedipus (Cotton-top tamarin).